Here is a 223-residue protein sequence, read N- to C-terminus: Small ribosomal subunit protein uS3 (223 aa).

Positions 38–106 (LKRELKEKLK…EVFIDILEVN (69 aa)) constitute a KH type-2 domain.

Belongs to the universal ribosomal protein uS3 family. In terms of assembly, part of the 30S ribosomal subunit. Forms a tight complex with proteins S10 and S14.

Its function is as follows. Binds the lower part of the 30S subunit head. Binds mRNA in the 70S ribosome, positioning it for translation. The sequence is that of Small ribosomal subunit protein uS3 from Acidobacterium capsulatum (strain ATCC 51196 / DSM 11244 / BCRC 80197 / JCM 7670 / NBRC 15755 / NCIMB 13165 / 161).